We begin with the raw amino-acid sequence, 242 residues long: ATP synthase subunit a (242 aa).

5 helical membrane passes run 21–41 (LSSILMILVTAFLVFLLAIIC), 83–103 (AVTLILYIFIANMLGLPFSIV), 117–137 (DATVTLTLSTTIILLTHFYGI), 175–195 (LYGNIFAGEILLTLLAGLFFN), and 198–218 (AWGWIISIPGLIVWQAFSIFV).

This sequence belongs to the ATPase A chain family. F-type ATPases have 2 components, CF(1) - the catalytic core - and CF(0) - the membrane proton channel. CF(1) has five subunits: alpha(3), beta(3), gamma(1), delta(1), epsilon(1). CF(0) has three main subunits: a(1), b(2) and c(9-12). The alpha and beta chains form an alternating ring which encloses part of the gamma chain. CF(1) is attached to CF(0) by a central stalk formed by the gamma and epsilon chains, while a peripheral stalk is formed by the delta and b chains.

The protein resides in the cell membrane. Its function is as follows. Key component of the proton channel; it plays a direct role in the translocation of protons across the membrane. This Staphylococcus aureus (strain Newman) protein is ATP synthase subunit a.